Here is a 561-residue protein sequence, read N- to C-terminus: Protein NRT1/ PTR FAMILY 5.13 (561 aa).

The chain crosses the membrane as a helical span at residues Ala78–Leu98. Thr103 carries the post-translational modification Phosphothreonine. Transmembrane regions (helical) follow at residues Ile104–Leu124, Ser133–Gly153, Phe183–Val203, Trp211–Leu231, Ile324–Phe344, Ile361–Tyr381, Ile405–Lys425, Ile447–Gly467, Ala486–Ile506, and Tyr530–Ser550.

The protein belongs to the major facilitator superfamily. Proton-dependent oligopeptide transporter (POT/PTR) (TC 2.A.17) family. In terms of tissue distribution, expressed in roots, flowers and siliques. Detected in stems and leaves.

It is found in the membrane. In Arabidopsis thaliana (Mouse-ear cress), this protein is Protein NRT1/ PTR FAMILY 5.13 (NPF5.13).